The sequence spans 103 residues: Putative membrane protein insertion efficiency factor (103 aa).

The protein belongs to the UPF0161 family.

It localises to the cell inner membrane. Its function is as follows. Could be involved in insertion of integral membrane proteins into the membrane. This chain is Putative membrane protein insertion efficiency factor, found in Chlamydia abortus (strain DSM 27085 / S26/3) (Chlamydophila abortus).